The chain runs to 352 residues: Pyruvate dehydrogenase E1 component subunit beta, mitochondrial (352 aa).

The N-terminal 21 residues, 1–21, are a transit peptide targeting the mitochondrion; sequence MALRKCGNLFVARLAGTSTRA. Glu-81 contacts thiamine diphosphate. Residues Ile-134, Ala-182, Ile-183, Asp-185, and Asn-187 each coordinate K(+).

As to quaternary structure, tetramer of 2 alpha and 2 beta subunits. Requires thiamine diphosphate as cofactor.

The protein localises to the mitochondrion matrix. It carries out the reaction N(6)-[(R)-lipoyl]-L-lysyl-[protein] + pyruvate + H(+) = N(6)-[(R)-S(8)-acetyldihydrolipoyl]-L-lysyl-[protein] + CO2. The pyruvate dehydrogenase complex catalyzes the overall conversion of pyruvate to acetyl-CoA and CO(2). It contains multiple copies of three enzymatic components: pyruvate dehydrogenase (E1), dihydrolipoamide acetyltransferase (E2) and lipoamide dehydrogenase (E3). The polypeptide is Pyruvate dehydrogenase E1 component subunit beta, mitochondrial (pdhb-1) (Caenorhabditis elegans).